The chain runs to 294 residues: Cytidine deaminase (294 aa).

2 consecutive CMP/dCMP-type deaminase domains span residues 48–168 and 186–294; these read DEDA…FGPK and LEGD…VLLG. 89–91 contributes to the substrate binding site; the sequence is NME. His-102 contacts Zn(2+). Residue Glu-104 is the Proton donor of the active site. Residues Cys-129 and Cys-132 each coordinate Zn(2+).

It belongs to the cytidine and deoxycytidylate deaminase family. As to quaternary structure, homodimer. Zn(2+) serves as cofactor.

It catalyses the reaction cytidine + H2O + H(+) = uridine + NH4(+). The enzyme catalyses 2'-deoxycytidine + H2O + H(+) = 2'-deoxyuridine + NH4(+). Functionally, this enzyme scavenges exogenous and endogenous cytidine and 2'-deoxycytidine for UMP synthesis. The polypeptide is Cytidine deaminase (Citrobacter koseri (strain ATCC BAA-895 / CDC 4225-83 / SGSC4696)).